Here is a 128-residue protein sequence, read N- to C-terminus: Holo-[acyl-carrier-protein] synthase (128 aa).

Positions 9 and 60 each coordinate Mg(2+).

Belongs to the P-Pant transferase superfamily. AcpS family. Mg(2+) serves as cofactor.

The protein resides in the cytoplasm. The catalysed reaction is apo-[ACP] + CoA = holo-[ACP] + adenosine 3',5'-bisphosphate + H(+). Its function is as follows. Transfers the 4'-phosphopantetheine moiety from coenzyme A to a Ser of acyl-carrier-protein. This Buchnera aphidicola subsp. Baizongia pistaciae (strain Bp) protein is Holo-[acyl-carrier-protein] synthase.